A 313-amino-acid chain; its full sequence is Porphobilinogen deaminase (313 aa).

Position 242 is an S-(dipyrrolylmethanemethyl)cysteine (Cys-242).

The protein belongs to the HMBS family. Monomer. Dipyrromethane serves as cofactor.

The enzyme catalyses 4 porphobilinogen + H2O = hydroxymethylbilane + 4 NH4(+). It participates in porphyrin-containing compound metabolism; protoporphyrin-IX biosynthesis; coproporphyrinogen-III from 5-aminolevulinate: step 2/4. Functionally, tetrapolymerization of the monopyrrole PBG into the hydroxymethylbilane pre-uroporphyrinogen in several discrete steps. The sequence is that of Porphobilinogen deaminase from Pseudomonas putida (strain W619).